The primary structure comprises 261 residues: Indole-3-glycerol phosphate synthase (261 aa).

The protein belongs to the TrpC family.

The catalysed reaction is 1-(2-carboxyphenylamino)-1-deoxy-D-ribulose 5-phosphate + H(+) = (1S,2R)-1-C-(indol-3-yl)glycerol 3-phosphate + CO2 + H2O. It participates in amino-acid biosynthesis; L-tryptophan biosynthesis; L-tryptophan from chorismate: step 4/5. The polypeptide is Indole-3-glycerol phosphate synthase (Paraburkholderia phymatum (strain DSM 17167 / CIP 108236 / LMG 21445 / STM815) (Burkholderia phymatum)).